The primary structure comprises 208 residues: Histone H1t (208 aa).

The span at 1 to 12 (MSETAPAASSTL) shows a compositional bias: polar residues. Positions 1 to 39 (MSETAPAASSTLVPAPVEKPSSKRRGKKPGLAPARKPRG) are disordered. Ser9 carries the phosphoserine modification. The H15 domain maps to 38 to 111 (RGFSVSKLIP…GASGSFKLSK (74 aa)). The residue at position 56 (Arg56) is a Citrulline. The tract at residues 95–208 (LVQTKGTGAS…TDLRKAAGRK (114 aa)) is disordered. Positions 121–134 (KGKKSASAKAKKMG) are enriched in basic residues. Residue Ser141 is modified to Phosphoserine. The segment covering 143 to 154 (KSSKTKAVKKPK) has biased composition (basic residues). Thr156 carries the phosphothreonine modification. Residues Ser163 and Ser178 each carry the phosphoserine modification. The segment covering 199-208 (TDLRKAAGRK) has biased composition (basic and acidic residues).

It belongs to the histone H1/H5 family. In terms of processing, phosphorylated in early spermatids. Citrullination at Arg-56 (H1R54ci) by PADI4 takes place within the DNA-binding site of H1 and results in its displacement from chromatin and global chromatin decondensation, thereby promoting pluripotency and stem cell maintenance. As to expression, testis-specific.

The protein resides in the nucleus. Its subcellular location is the chromosome. In terms of biological role, testis-specific histone H1 that forms less compacted chromatin compared to other H1 histone subtypes. Formation of more relaxed chromatin may be required to promote chromatin architecture required for proper chromosome regulation during meiosis, such as homologous recombination. Histones H1 act as linkers that bind to nucleosomes and compact polynucleosomes into a higher-order chromatin configuration. The chain is Histone H1t from Mus musculus (Mouse).